A 764-amino-acid polypeptide reads, in one-letter code: MPAKIHISADGQFCDKDGNEIQLRGVNLDPSVKIPAKPFLSTHAPIENDTFFEDADKVSFINHPLVLDDIEQHIIRLKSLGYNTIRLPFTWESLEHAGPGQYDFDYMDYIVEVLTRINSVQQGMYIYLDPHQDVWSRFSGGSGAPLWTLYCAGFQPANFLATDAAILHNYYIDPKTGREVGKDEESYPKMVWPTNYFKLACQTMFTLFFGGKQYAPKCTINGENIQDYLQGRFNDAIMTLCARIKEKAPELFESNCIIGLESMNEPNCGYIGETNLDVIPKERNLKLGKTPTAFQSFMLGEGIECTIDQYKRTFFGFSKGKPCTINPKGKKAWLSAEERDAIDAKYNWERNPEWKPDTCIWKLHGVWEIQNGKRPVLLKPNYFSQPDATVFINNHFVDYYTGIYNKFREFDQELFIIIQPPVMKPPPNLQNSKILDNRTICACHFYDGMTLMYKTWNKRIGIDTYGLVNKKYSNPAFAVVLGENNIRKCIRKQLSEMQKDAKSMLGKKVPVFFTEIGIPFDMDDKKAYITNDYSSQTAALDALGFALEGSNLSYTLWCYCSINSHIWGDNWNNEDFSIWSPDDKPLYHDTRAKTPTPEPSPASTVASVSTSTSKSGSSQPPSFIKPDNHLDLDSPSCTLKSDLSGFRALDAIMRPFPIQIHGRFEFAEFNLCNKSYLLKLVGKTTPEQITVPTYIFIPRHHFTPSRLSIRSSSGHYTYNTDYQVLEWFHEPGHQFIEICAKSKSRPNTPGSDTSNDLPAECVIS.

The Nucleophile role is filled by Glu515. Residues 588-629 form a disordered region; sequence HDTRAKTPTPEPSPASTVASVSTSTSKSGSSQPPSFIKPDNH. Thr594 bears the Phosphothreonine mark. A compositionally biased stretch (low complexity) spans 601 to 622; sequence PASTVASVSTSTSKSGSSQPPS.

Belongs to the glycosyl hydrolase 5 (cellulase A) family.

The protein localises to the cytoplasm. Its subcellular location is the cytosol. It is found in the vacuole membrane. It carries out the reaction ergosteryl 3-beta-D-glucoside + H2O = ergosterol + D-glucose. Its function is as follows. Ergosteryl beta-glucosidase involved in the ergosteryl beta-glucoside (EG) catabolic pathway and vacuole formation via hydrolysis of EG to generate glucose. Is also able to hydrolyze cholesteryl beta-glucoside and sitosteryl beta-glucoside to generate glucose; and C6-7-nitro-2,1,3-benzoxadiazole (NBD)-GlcCer to generate C6-NBD-ceramide (Cer). In Saccharomyces cerevisiae (strain ATCC 204508 / S288c) (Baker's yeast), this protein is Ergosteryl-beta-glucosidase.